The primary structure comprises 90 residues: Conotoxin TxMMSK-06 (90 aa).

Positions 1-22 (MMSKLGVLLTICLLLFPHTAVP) are cleaved as a signal peptide. A propeptide spanning residues 23–74 (LDGDQHADQPAERLQDDISSEHHPMLNSIRRREQNQFMSFTSVKLRDSRGER) is cleaved from the precursor. The segment at 24-43 (DGDQHADQPAERLQDDISSE) is disordered. Residues 25 to 43 (GDQHADQPAERLQDDISSE) are compositionally biased toward basic and acidic residues. 3 disulfide bridges follow: C75–C89, C76–C85, and C81–C88. P87 is subject to 4-hydroxyproline. C89 is modified (cysteine amide).

This sequence belongs to the conotoxin M superfamily. As to expression, expressed by the venom duct.

It localises to the secreted. This Conus textile (Cloth-of-gold cone) protein is Conotoxin TxMMSK-06.